The primary structure comprises 494 residues: UPF0371 protein SPG_0310 (494 aa).

The protein belongs to the UPF0371 family.

The protein is UPF0371 protein SPG_0310 of Streptococcus pneumoniae serotype 19F (strain G54).